We begin with the raw amino-acid sequence, 229 residues long: Leucyl/phenylalanyl-tRNA--protein transferase (229 aa).

This sequence belongs to the L/F-transferase family.

It is found in the cytoplasm. The catalysed reaction is N-terminal L-lysyl-[protein] + L-leucyl-tRNA(Leu) = N-terminal L-leucyl-L-lysyl-[protein] + tRNA(Leu) + H(+). The enzyme catalyses N-terminal L-arginyl-[protein] + L-leucyl-tRNA(Leu) = N-terminal L-leucyl-L-arginyl-[protein] + tRNA(Leu) + H(+). It catalyses the reaction L-phenylalanyl-tRNA(Phe) + an N-terminal L-alpha-aminoacyl-[protein] = an N-terminal L-phenylalanyl-L-alpha-aminoacyl-[protein] + tRNA(Phe). Its function is as follows. Functions in the N-end rule pathway of protein degradation where it conjugates Leu, Phe and, less efficiently, Met from aminoacyl-tRNAs to the N-termini of proteins containing an N-terminal arginine or lysine. This Desulforapulum autotrophicum (strain ATCC 43914 / DSM 3382 / VKM B-1955 / HRM2) (Desulfobacterium autotrophicum) protein is Leucyl/phenylalanyl-tRNA--protein transferase.